Consider the following 235-residue polypeptide: High mobility group protein 1.2 (235 aa).

Residues 1–34 show a composition bias toward polar residues; sequence MNSGYSANIFPSSSSPTLYQSHQLQPNPSATMYQ. Positions 1–47 are disordered; sequence MNSGYSANIFPSSSSPTLYQSHQLQPNPSATMYQATPRDMGKPPVRG. 2 consecutive DNA-binding regions (HMG box) follow at residues 47–117 and 135–203; these read GKTS…AAYG and PKRA…RNYK.

The protein belongs to the HMGB family.

The protein localises to the nucleus. The chain is High mobility group protein 1.2 (hmg-1.2) from Caenorhabditis elegans.